Reading from the N-terminus, the 276-residue chain is uncharacterized protein (276 aa).

10 helical membrane passes run 5–25, 31–51, 63–83, 89–109, 119–139, 142–162, 168–188, 200–220, 231–251, and 253–273; these read IVLA…KYSV, IAIA…IIIL, VFAL…LGEV, VASV…AIFL, VGII…YANI, IALV…GKSL, PITL…PFLP, LIGS…LGWY, ASVF…ILLA, and PLTL…YIVV. EamA domains follow at residues 12–133 and 150–274; these read TFWG…VISE and VAAA…IVVR.

This sequence belongs to the EamA transporter family.

The protein resides in the cell membrane. This is an uncharacterized protein from Archaeoglobus fulgidus (strain ATCC 49558 / DSM 4304 / JCM 9628 / NBRC 100126 / VC-16).